The chain runs to 332 residues: D-lactate dehydrogenase (332 aa).

NAD(+)-binding positions include 155–156 (RI), Asp175, 206–207 (VP), Asn212, and 233–235 (FAR). Catalysis depends on residues Arg235 and Glu264. His296 serves as the catalytic Proton donor.

Belongs to the D-isomer specific 2-hydroxyacid dehydrogenase family. In terms of assembly, homodimer.

It catalyses the reaction (R)-lactate + NAD(+) = pyruvate + NADH + H(+). The polypeptide is D-lactate dehydrogenase (Lactiplantibacillus pentosus (Lactobacillus pentosus)).